Here is a 1877-residue protein sequence, read N- to C-terminus: MDWDWGNRCSRPGRRDLLCVLALLAGCLLPVCRTRVYTNHWAVKIAGGFAEADRIASKYGFINVGQIGALKDYYHFYHSRTIKRSVLSSRGTHSFISMEPKVEWIQQQVVKKRTKRDYDLSHAQSTYFNDPKWPSMWYMHCSDNTHPCQSDMNIEGAWKRGYTGKNIVVTILDDGIERTHPDLMQNYDALASCDVNGNDLDPMPRYDASNENKHGTRCAGEVAATANNSHCTVGIAFNAKIGGVRMLDGDVTDMVEAKSVSYNPQHVHIYSASWGPDDDGKTVDGPAPLTRQAFENGVRMGRRGLGSVFVWASGNGGRSKDHCSCDGYTNSIYTISISSTAESGKKPWYLEECSSTLATTYSSGESYDKKIITTDLRQRCTDNHTGTSASAPMAAGIIALALEANPFLTWRDVQHVIVRTSRAGHLNANDWKTNAAGFKVSHLYGFGLMDAEAMVMEAEKWTTVPQQHVCVESTDRQIKTIRPNSAVRSIYKASGCSDNPNHHVNYLEHVVVRITITHPRRGDLAIYLTSPSGTRSQLLANRLFDHSMEGFKNWEFMTIHCWGERAAGDWVLEVYDTPSQLRNFKTPGKLKEWSLVLYGTSVQPYSPTNEFPKVERFRYSRVEDPTDDYGAEDYAGPCDPECSEVGCDGPGPDHCSDCLHYYYKLKNNTRICVSSCPPGHYHADKKRCRKCAPNCESCFGSHGNQCLSCKYGYFLNEETSSCVTQCPDGSYEDIKKNVCGKCSENCKACIGFHNCTECKGGLSLQGSRCSVTCEDGQFFNGHDCQPCHRFCATCSGAGADGCINCTEGYVMEEGRCVQSCSVSYYLDHSSEGGYKSCKRCDNSCLTCNGPGFKNCSSCPSGYLLDLGTCQMGAICKDGEYIDDQGHCQTCEASCAKCWGPTQEDCISCPVTRVLDDGRCVMNCPSWKFEFKKQCHPCHYTCQGCQGSGPSNCTSCRADKHGQERFLYHGECLENCPVGHYPAKGHACLPCPDNCELCYNPHVCSRCMSGYVIIPPNHTCQKLECRQGEFQDSEYEECMPCEEGCLGCTEDDPGACTSCATGYYMFERHCYKACPEKTFGVKWECRACGTNCGSCDQHECYWCEEGFFLSGGSCVQDCGPGFHGDQELGECKPCHRACENCTGSGYNQCSSCQEGLQLWHGTCLWSTWPQVEGKDWNEAVPTEKPSLVRSLLQDRRKWKVQIKRDATSQNQPCHSSCKTCNGSLCASCPTGMYLWLQACVPSCPQGTWPSVTSGSCEKCSEDCVSCSGADLCQQCLSQPDNTLLLHEGRCYHSCPEGFYAKDGVCEHCSSPCKTCEGNATSCNSCEGDFVLDHGVCWKTCPEKHVAVEGVCKHCPERCQDCIHEKTCKECMPDFFLYNDMCHRSCPKSFYPDMRQCVPCHKNCLECNGPKEDDCKVCADTSKALHNGLCLDECPEGTYKEEENDECRDCPESCLICSSAWTCLACREGFTVVHDVCTAPKECAAVEYWDEGSHRCQPCHKKCSRCSGPSEDQCYTCPRETFLLNTTCVKECPEGYHTDKDSQQCVLCHSSCRTCEGPHSMQCLSCRPGWFQLGKECLLQCRDGYYGESTSGRCEKCDKSCKSCRGPRPTDCQSCDTFFFLLRSKGQCHRACPEHYYADQHAQTCERCHPTCDKCSGKEAWSCLSCVWSYHLLKGICIPECIVGEYREGKGENFNCKKCHESCMECKGPGSKNCTGCSAGLLLDMDDNRCLHCCNASHSRRSQDCCDCQSSTDECILPAREAEFYEHTKTALLVTSGAMLLLLLGAAAVVWRKSRSRPVAKGRYEKLAEPTVSYSSYRSSYLDEDQVIEYRDRDYDEDDEDDIVYMGQDGTVYRKFKYGLLDETEDDELEYDDESYSYQ.

The first 34 residues, 1 to 34 (MDWDWGNRCSRPGRRDLLCVLALLAGCLLPVCRT), serve as a signal peptide directing secretion. A propeptide spanning residues 35 to 116 (RVYTNHWAVK…QQVVKKRTKR (82 aa)) is cleaved from the precursor. The Extracellular segment spans residues 117 to 1768 (DYDLSHAQST…EAEFYEHTKT (1652 aa)). The Peptidase S8 domain maps to 136 to 455 (MWYMHCSDNT…FGLMDAEAMV (320 aa)). Residues Asp-173 and His-214 each act as charge relay system in the active site. Asn-227 and Asn-383 each carry an N-linked (GlcNAc...) asparagine glycan. Ser-388 acts as the Charge relay system in catalysis. The P/Homo B domain occupies 463–603 (TVPQQHVCVE…SLVLYGTSVQ (141 aa)). The Cell attachment site signature appears at 521 to 523 (RGD). FU repeat units follow at residues 632–682 (EDYA…GHYH), 685–732 (KKRC…GSYE), 736–779 (KNVC…GQFF), 781–826 (GHDC…SYYL), 834–881 (YKSC…GEYI), 884–929 (QGHC…WKFE), 931–981 (KKQC…GHYP), 984–1030 (GHAC…GEFQ), 1034–1079 (YEEC…KTFG), 1081–1123 (KWEC…GFHG), 1127–1168 (LGEC…STWP), 1206–1248 (TSQN…GTWP), 1252–1299 (SGSC…GFYA), 1301–1345 (DGVC…KHVA), 1347–1390 (EGVC…SFYP), 1392–1438 (MRQC…GTYK), 1442–1487 (NDEC…VEYW), 1491–1536 (SHRC…GYHT), 1540–1585 (SQQC…GYYG), 1589–1636 (SGRC…HYYA), 1640–1685 (AQTC…GEYR), and 1691–1738 (NFNC…SHSR). The interval 638–1753 (CDPECSEVGC…CDCQSSTDEC (1116 aa)) is CRM (Cys-rich motif). N-linked (GlcNAc...) asparagine glycosylation occurs at Asn-667. N-linked (GlcNAc...) asparagine glycosylation is found at Asn-754, Asn-804, and Asn-854. 2 N-linked (GlcNAc...) asparagine glycosylation sites follow: Asn-951 and Asn-1016. Asn-1220 carries an N-linked (GlcNAc...) asparagine glycan. N-linked (GlcNAc...) asparagine glycosylation occurs at Asn-1317. The N-linked (GlcNAc...) asparagine glycan is linked to Asn-1523. 2 N-linked (GlcNAc...) asparagine glycosylation sites follow: Asn-1711 and Asn-1733. Residues 1769–1789 (ALLVTSGAMLLLLLGAAAVVW) traverse the membrane as a helical segment. Topologically, residues 1790–1877 (RKSRSRPVAK…EYDDESYSYQ (88 aa)) are cytoplasmic. AC stretches follow at residues 1825–1844 (VIEY…IVYM) and 1856–1877 (YGLL…YSYQ).

This sequence belongs to the peptidase S8 family. PC5A is expressed in most tissues but is most abundant in the intestine and adrenals. PC5B is expressed in the intestine, adrenals and lung but not in the brain.

It is found in the secreted. The protein resides in the endomembrane system. Functionally, serine endoprotease that processes various proproteins by cleavage at paired basic amino acids, recognizing the RXXX[KR]R consensus motif. Likely functions in the constitutive and regulated secretory pathways. Plays an essential role in pregnancy establishment by proteolytic activation of a number of important factors such as BMP2, CALD1 and alpha-integrins. May be responsible for the maturation of gastrointestinal peptides. May be involved in the cellular proliferation of adrenal cortex via the activation of growth factors. The sequence is that of Proprotein convertase subtilisin/kexin type 5 (Pcsk5) from Mus musculus (Mouse).